The following is a 313-amino-acid chain: Porphobilinogen deaminase (313 aa).

Residue Cys-242 is modified to S-(dipyrrolylmethanemethyl)cysteine.

Belongs to the HMBS family. As to quaternary structure, monomer. The cofactor is dipyrromethane.

The enzyme catalyses 4 porphobilinogen + H2O = hydroxymethylbilane + 4 NH4(+). It functions in the pathway porphyrin-containing compound metabolism; protoporphyrin-IX biosynthesis; coproporphyrinogen-III from 5-aminolevulinate: step 2/4. Tetrapolymerization of the monopyrrole PBG into the hydroxymethylbilane pre-uroporphyrinogen in several discrete steps. The polypeptide is Porphobilinogen deaminase (Pseudomonas paraeruginosa (strain DSM 24068 / PA7) (Pseudomonas aeruginosa (strain PA7))).